Consider the following 369-residue polypeptide: Nuclear pore complex-interacting protein family member A7 (369 aa).

The tract at residues 151–171 (SMKEREHREEERQVSEAEENG) is disordered.

This sequence belongs to the NPIP family.

The sequence is that of Nuclear pore complex-interacting protein family member A7 (NPIPA7) from Homo sapiens (Human).